Reading from the N-terminus, the 2108-residue chain is General negative regulator of transcription subunit 1 (2108 aa).

2 coiled-coil regions span residues 795–813 (NVTLANLNNKVDELKKSLT) and 1021–1046 (MQQHQQQMLIYQQRQQQQQQRQQQQQ). The segment at 1323–1352 (QQQQLQKSRLNQPSQSAQPPGVNVPNPQGG) is disordered. Positions 1329 to 1339 (KSRLNQPSQSA) are enriched in polar residues. Residues 1340–1352 (QPPGVNVPNPQGG) are compositionally biased toward low complexity. A Phosphothreonine modification is found at threonine 2102.

This sequence belongs to the CNOT1 family. In terms of assembly, forms a NOT protein complex that comprises NOT1, NOT2, NOT3, NOT4 and NOT5. Subunit of the 1.0 MDa CCR4-NOT core complex that contains CCR4, CAF1, NOT1, NOT2, NOT3, NOT4, NOT5, CAF40 and CAF130. In the complex interacts with CCR4, POP2, NOT2, NOT4 and NOT5. The core complex probably is part of a less characterized 1.9 MDa CCR4-NOT complex.

It is found in the cytoplasm. The protein resides in the nucleus. Functionally, acts as a component of the CCR4-NOT core complex, which in the nucleus seems to be a general transcription factor, and in the cytoplasm the major mRNA deadenylase involved in mRNA turnover. The NOT protein subcomplex negatively regulates the basal and activated transcription of many genes. Preferentially affects TC-type TATA element-dependent transcription. Could directly or indirectly inhibit component(s) of the general transcription machinery. This chain is General negative regulator of transcription subunit 1 (CDC39), found in Saccharomyces cerevisiae (strain ATCC 204508 / S288c) (Baker's yeast).